A 158-amino-acid chain; its full sequence is S-ribosylhomocysteine lyase (158 aa).

His-57, His-61, and Cys-125 together coordinate Fe cation.

It belongs to the LuxS family. Homodimer. The cofactor is Fe cation.

It carries out the reaction S-(5-deoxy-D-ribos-5-yl)-L-homocysteine = (S)-4,5-dihydroxypentane-2,3-dione + L-homocysteine. Functionally, involved in the synthesis of autoinducer 2 (AI-2) which is secreted by bacteria and is used to communicate both the cell density and the metabolic potential of the environment. The regulation of gene expression in response to changes in cell density is called quorum sensing. Catalyzes the transformation of S-ribosylhomocysteine (RHC) to homocysteine (HC) and 4,5-dihydroxy-2,3-pentadione (DPD). This Deinococcus radiodurans (strain ATCC 13939 / DSM 20539 / JCM 16871 / CCUG 27074 / LMG 4051 / NBRC 15346 / NCIMB 9279 / VKM B-1422 / R1) protein is S-ribosylhomocysteine lyase.